Reading from the N-terminus, the 135-residue chain is ATP synthase epsilon chain (135 aa).

Residues 91–122 (EAQKQLSEAEQAWSKFDGQPNSPDKIKAQQAF) are disordered.

It belongs to the ATPase epsilon chain family. In terms of assembly, F-type ATPases have 2 components, CF(1) - the catalytic core - and CF(0) - the membrane proton channel. CF(1) has five subunits: alpha(3), beta(3), gamma(1), delta(1), epsilon(1). CF(0) has three main subunits: a, b and c.

Its subcellular location is the cellular thylakoid membrane. Produces ATP from ADP in the presence of a proton gradient across the membrane. This Synechococcus sp. (strain RCC307) protein is ATP synthase epsilon chain.